The following is an 85-amino-acid chain: Putative membrane protein insertion efficiency factor (85 aa).

This sequence belongs to the UPF0161 family.

It is found in the cell membrane. Functionally, could be involved in insertion of integral membrane proteins into the membrane. In Baumannia cicadellinicola subsp. Homalodisca coagulata, this protein is Putative membrane protein insertion efficiency factor.